A 395-amino-acid chain; its full sequence is PCI domain-containing protein 2 homolog (395 aa).

Residues 208-389 (ITYKYFVGRR…NKLVVSKQNP (182 aa)) enclose the PCI domain.

It belongs to the CSN12 family. Component of the nuclear pore complex (NPC)-associated TREX-2/AMEX complex (anchoring and mRNA export complex), composed of e(y)2, xmas and PCID2. Interaction between the TREX-2/AMEX complex and the ORC complex is required for ORC localization to mRNPs, and consequently mRNA export. Within the TREX-2/AMEX-ORC complex, interacts with Orc3 and Orc4. Interacts with sbr/NXF1. Interacts with Moe. Interacts with nudC; required to maintain stability in the cytoplasm. Mono- and poly-ubiquitinated.

The protein resides in the nucleus. It localises to the cytoplasm. The protein localises to the nucleus membrane. It is found in the cytoskeleton. In terms of biological role, required for the export of nuclear mRNAs and involved in mRNA trafficking in the cytoplasm. Component of the nuclear pore complex (NPC)-associated TREX-2/AMEX complex (anchoring and mRNA export complex) which functions in docking export-competent ribonucleoprotein particles (mRNPs) to the nuclear entrance of the nuclear pore complex (nuclear basket), thereby enabling the export of mRNAs to the cytoplasm through the nuclear pores. Within the complex, specifically promotes the association of factors involved in regulating nuclear mRNA export, such as Moe, sbr/NXF1 and the ORC complex, to the mRNPs particles. In the cytoplasm, functions independently of its role in the TREX-2/AMEX complex, to promote cytoplasmic mRNA trafficking together with nudC. Associates with translationally active polysomes. This chain is PCI domain-containing protein 2 homolog, found in Drosophila melanogaster (Fruit fly).